A 713-amino-acid polypeptide reads, in one-letter code: Forkhead box protein P2 (713 aa).

Residues 1 to 28 show a composition bias toward polar residues; that stretch reads MMQESATETISNSSMNQNGMSTLSSQLD. Disordered stretches follow at residues 1 to 44 and 283 to 337; these read MMQE…SSEV and KHGG…TGAS. Residues 290 to 303 show a composition bias toward low complexity; it reads TTNNSSSTTSSTTS. Polar residues predominate over residues 313–322; sequence SIVNGQSSVL. A compositionally biased stretch (basic and acidic residues) spans 324 to 335; the sequence is ARRDSSSHEETG. The segment at 344–369 adopts a C2H2-type zinc-finger fold; the sequence is GVCKWPGCESICEDFGQFLKHLNNEH. A leucine-zipper region spans residues 386–407; that stretch reads VQQLEIQLSKERERLQAMMTHL. A CTBP1-binding region spans residues 420-424; that stretch reads PLNLV. Residues 436–457 are compositionally biased toward low complexity; it reads TSPQSLPQTPTTPTAPVTPITQ. Residues 436–463 form a disordered region; that stretch reads TSPQSLPQTPTTPTAPVTPITQGPSVIT. The fork-head DNA-binding region spans 502–592; sequence RPPFTYATLI…SQKITGSPTL (91 aa). Disordered regions lie at residues 647 to 666 and 676 to 713; these read LDHI…QPHI and VIAE…EDLE. Residues 697-713 are compositionally biased toward acidic residues; the sequence is LEDDREIEEEPLSEDLE.

Forms homodimers and heterodimers with FOXP1 and FOXP4. Dimerization is required for DNA-binding. Interacts with CTBP1. Interacts with FOXP1. Interacts with TBR1. Interacts with ZMYM2.

It localises to the nucleus. In terms of biological role, transcriptional repressor that may play a role in the specification and differentiation of lung epithelium. May also play a role in developing neural, gastrointestinal and cardiovascular tissues. Can act with CTBP1 to synergistically repress transcription but CTPBP1 is not essential. Plays a role in synapse formation by regulating SRPX2 levels. In Gorilla gorilla gorilla (Western lowland gorilla), this protein is Forkhead box protein P2 (FOXP2).